The following is an 85-amino-acid chain: Putative defensin-like protein 142 (85 aa).

The N-terminal stretch at 1–24 (MKKSFLFTFTVLTIFTILVIGVAP) is a signal peptide. Disulfide bonds link cysteine 30/cysteine 78, cysteine 41/cysteine 63, cysteine 46/cysteine 73, and cysteine 50/cysteine 75.

The protein belongs to the DEFL family.

Its subcellular location is the secreted. This is Putative defensin-like protein 142 (LCR34) from Arabidopsis thaliana (Mouse-ear cress).